The following is a 211-amino-acid chain: Small ribosomal subunit protein uS3 (211 aa).

One can recognise a KH type-2 domain in the interval 38-106 (LRKFIKKAFY…NIELNIIEVK (69 aa)).

Belongs to the universal ribosomal protein uS3 family. As to quaternary structure, part of the 30S ribosomal subunit. Forms a tight complex with proteins S10 and S14.

Functionally, binds the lower part of the 30S subunit head. Binds mRNA in the 70S ribosome, positioning it for translation. The chain is Small ribosomal subunit protein uS3 from Ehrlichia ruminantium (strain Gardel).